Reading from the N-terminus, the 379-residue chain is Fimbrium subunit Fim1C (379 aa).

The first 17 residues, 1–17, serve as a signal peptide directing secretion; that stretch reads MEVKSLLMVMATLTIAG. Cys18 carries N-palmitoyl cysteine lipidation. A lipid anchor (S-diacylglycerol cysteine) is attached at Cys18. Residues 18 to 45 constitute a propeptide that is removed on maturation; it reads CSQNEMTEMNPDTNRTIGLDVYTEVQTR.

Belongs to the bacteroidetes fimbrillin superfamily. Mfa-like family. May be part of the fimbrial tip.

Its subcellular location is the fimbrium. It localises to the cell outer membrane. Its function is as follows. Probably a component of the fimbrium tip. Fimbriae are filamentous appendages on the cell surface that mediate cell adhesion and biofilm formation. The sequence is that of Fimbrium subunit Fim1C (fim1C) from Phocaeicola vulgatus (strain ATCC 8482 / DSM 1447 / JCM 5826 / CCUG 4940 / NBRC 14291 / NCTC 11154) (Bacteroides vulgatus).